A 90-amino-acid polypeptide reads, in one-letter code: Small ribosomal subunit protein bS16 (90 aa).

Belongs to the bacterial ribosomal protein bS16 family.

This chain is Small ribosomal subunit protein bS16, found in Streptococcus gordonii (strain Challis / ATCC 35105 / BCRC 15272 / CH1 / DL1 / V288).